The primary structure comprises 421 residues: MDFLSITGGEKLQGSVSVSGAKNAALPLISATLLAKNEACLKNLPDVVDIKTLLSLLEMLGAKVQRIDPHTVKVNSSEILSTKATYDIVRKMRASILVLGPLLSRFGKCEVSLPGGCAIGARPVDLHLKAMEKMGAIVEIKGGYIVANAPKGLKGATIAFDKITVTGTENVVMAAALAKGVTKILNAAQEPEVVQLCEVLQAAGVEIKGIGSNELEIVGQEGEALEFKEVEVIPDRIEAGTYLCAGAMTNSSIRLERVVPEHLSAVTQKLEEIGFGIEYGENHLTLLPASKRRAFEIITTEYPGFPTDMQAQFMALATQCEGASIIEERLFENRFMHVSELQRLGAGIHLRGNTATVNGGTKLLCADVMATDLRASSALVLAALAAEGTTNIHRIYHLDRGYERLEEKLRALGAVIERGRE.

Residue 22 to 23 participates in phosphoenolpyruvate binding; sequence KN. Position 93 (Arg93) interacts with UDP-N-acetyl-alpha-D-glucosamine. The active-site Proton donor is Cys117. At Cys117 the chain carries 2-(S-cysteinyl)pyruvic acid O-phosphothioketal. Residues 122-126, Asp308, and Leu330 each bind UDP-N-acetyl-alpha-D-glucosamine; that span reads RPVDL.

It belongs to the EPSP synthase family. MurA subfamily.

The protein resides in the cytoplasm. It catalyses the reaction phosphoenolpyruvate + UDP-N-acetyl-alpha-D-glucosamine = UDP-N-acetyl-3-O-(1-carboxyvinyl)-alpha-D-glucosamine + phosphate. It participates in cell wall biogenesis; peptidoglycan biosynthesis. Cell wall formation. Adds enolpyruvyl to UDP-N-acetylglucosamine. In Wolinella succinogenes (strain ATCC 29543 / DSM 1740 / CCUG 13145 / JCM 31913 / LMG 7466 / NCTC 11488 / FDC 602W) (Vibrio succinogenes), this protein is UDP-N-acetylglucosamine 1-carboxyvinyltransferase.